Consider the following 90-residue polypeptide: Small ribosomal subunit protein uS15 (90 aa).

This sequence belongs to the universal ribosomal protein uS15 family. As to quaternary structure, part of the 30S ribosomal subunit. Forms a bridge to the 50S subunit in the 70S ribosome, contacting the 23S rRNA.

Its function is as follows. One of the primary rRNA binding proteins, it binds directly to 16S rRNA where it helps nucleate assembly of the platform of the 30S subunit by binding and bridging several RNA helices of the 16S rRNA. In terms of biological role, forms an intersubunit bridge (bridge B4) with the 23S rRNA of the 50S subunit in the ribosome. This chain is Small ribosomal subunit protein uS15, found in Helicobacter pylori (strain P12).